We begin with the raw amino-acid sequence, 842 residues long: Glycogen phosphorylase, muscle form (842 aa).

S2 carries the N-acetylserine modification. A Phosphoserine; by PHK; in form phosphorylase A modification is found at S15. Residues D43 and Y76 each coordinate AMP. Residues Y204 and Y227 each carry the phosphotyrosine modification. R310–C319 lines the AMP pocket. At S430 the chain carries Phosphoserine. Residue Y473 is modified to Phosphotyrosine. Phosphoserine is present on S514. K681 bears the N6-(pyridoxal phosphate)lysine mark. A phosphoserine mark is found at S747 and S748.

This sequence belongs to the glycogen phosphorylase family. In terms of assembly, homodimer. Homotetramer; to form the enzymatically active phosphorylase A. Requires pyridoxal 5'-phosphate as cofactor. In terms of processing, phosphorylation of Ser-15 converts phosphorylase B (unphosphorylated) to phosphorylase A.

The catalysed reaction is [(1-&gt;4)-alpha-D-glucosyl](n) + phosphate = [(1-&gt;4)-alpha-D-glucosyl](n-1) + alpha-D-glucose 1-phosphate. Allosterically regulated through the non-covalent binding of metabolites, being activated by AMP and inhibited by ATP, ADP, and glucose-6-phosphate. The activity is also controlled by post-translational modifications including phosphorylation. Allosteric enzyme that catalyzes the rate-limiting step in glycogen catabolism, the phosphorolytic cleavage of glycogen to produce glucose-1-phosphate, and plays a central role in maintaining cellular and organismal glucose homeostasis. The sequence is that of Glycogen phosphorylase, muscle form from Macaca fascicularis (Crab-eating macaque).